The sequence spans 644 residues: Exoribonuclease 2 (644 aa).

One can recognise an RNB domain in the interval Arg189–Lys516. An S1 motif domain is found at Asp561–Val643.

Belongs to the RNR ribonuclease family. RNase II subfamily.

The protein localises to the cytoplasm. It carries out the reaction Exonucleolytic cleavage in the 3'- to 5'-direction to yield nucleoside 5'-phosphates.. Its function is as follows. Involved in mRNA degradation. Hydrolyzes single-stranded polyribonucleotides processively in the 3' to 5' direction. The protein is Exoribonuclease 2 of Escherichia fergusonii (strain ATCC 35469 / DSM 13698 / CCUG 18766 / IAM 14443 / JCM 21226 / LMG 7866 / NBRC 102419 / NCTC 12128 / CDC 0568-73).